The primary structure comprises 244 residues: Transforming protein v-Fos/v-Fox (244 aa).

Residues 1-236 (DSLSYYHSPA…LFPASSGHSG (236 aa)) are transforming protein v-Fos. A bZIP domain is found at 113 to 176 (EVKRRIRRER…EKLEFILAAH (64 aa)). The interval 115-135 (KRRIRRERNKMAAAKCRNRRR) is basic motif. A leucine-zipper region spans residues 141–169 (LQAETDQLEDEKSALQTEIANLLKEKEKL). The interval 237–244 (FISMAGWQ) is transforming protein v-Fox.

Belongs to the bZIP family. Fos subfamily.

It is found in the host nucleus. The sequence is that of Transforming protein v-Fos/v-Fox (FOS-FOX) from Mus musculus (Mouse).